We begin with the raw amino-acid sequence, 98 residues long: NADH-ubiquinone oxidoreductase chain 4L (98 aa).

Transmembrane regions (helical) follow at residues 1 to 21, 29 to 49, and 61 to 81; these read MSMVYMNIMMAFTVSLVGLLM, SLLCLEGMMLSLFVMAALTIL, and IILLVFAACEAALGLSLLVMV.

The protein belongs to the complex I subunit 4L family. In terms of assembly, core subunit of respiratory chain NADH dehydrogenase (Complex I) which is composed of 45 different subunits.

It localises to the mitochondrion inner membrane. The enzyme catalyses a ubiquinone + NADH + 5 H(+)(in) = a ubiquinol + NAD(+) + 4 H(+)(out). In terms of biological role, core subunit of the mitochondrial membrane respiratory chain NADH dehydrogenase (Complex I) which catalyzes electron transfer from NADH through the respiratory chain, using ubiquinone as an electron acceptor. Part of the enzyme membrane arm which is embedded in the lipid bilayer and involved in proton translocation. This Bos indicus (Zebu) protein is NADH-ubiquinone oxidoreductase chain 4L (MT-ND4L).